The chain runs to 347 residues: MALVPVGMAPRQMRVNRCIFASIVSFDACITYKSPCSPDAYHDDGWFICNNHLIKRFKMSKMVLPIFDEDDNQFKMTIARHLVGNKERGIKRILIPSATNYQDVFNLNSMMQAEQLIFHLIYNNENAVNTICDNLKYTEGFTSNTQRVIHSVYATTKSILDTTNPNTFCSRVSRDELRFFDVTNARALRGGAGDQLFNNYSGFLQNLIRRAVAPEYLQIDTEELRFRNCATCIIDETGLVASVPDGPELYNPIRSSDIMRSQPNRLQIRNVLKFEGDTRELDRTLSGYEEYPTYVPLFLGYQIINSENNFLRNDFIPRANPNATLGGGAVAGPAPGVAGEAGGGIAV.

Belongs to the baculoviridae major capsid protein family.

It localises to the virion. In terms of biological role, most abundant structural protein of the nucleocapsid produced during the infection cycle. The monomers are arranged in stacked rings around the nucleoprotein core. The polypeptide is Major capsid protein (P39) (Autographa californica nuclear polyhedrosis virus (AcMNPV)).